A 721-amino-acid chain; its full sequence is Dipeptidyl-peptidase 5 (721 aa).

A signal peptide spans 1 to 18 (MGAFRWLSIAAAASTALA). N-linked (GlcNAc...) asparagine glycans are attached at residues N75, N94, N151, and N254. Positions 271–297 (ARPINGPDSPGTPKGIKGDSSSPVFSP) are disordered. N-linked (GlcNAc...) asparagine glycans are attached at residues N380 and N450. S560 acts as the Charge relay system in catalysis. N607 is a glycosylation site (N-linked (GlcNAc...) asparagine). Residues D643 and H675 each act as charge relay system in the active site.

It belongs to the peptidase S9C family. N-glycosylated. As to expression, expressed in mycelia and conidia.

It localises to the secreted. Functionally, may be involved in metabolism of dipeptides or may affect host defense mechanisms. Has a substrate specificity limited to the hydrolysis of X-Ala, His-Ser, and Ser-Tyr dipeptides at a neutral pH optimum. The sequence is that of Dipeptidyl-peptidase 5 from Aspergillus fumigatus (strain ATCC MYA-4609 / CBS 101355 / FGSC A1100 / Af293) (Neosartorya fumigata).